A 246-amino-acid chain; its full sequence is tRNA (guanine-N(1)-)-methyltransferase (246 aa).

S-adenosyl-L-methionine contacts are provided by residues Gly-114 and 134–139 (IGDYIL).

It belongs to the RNA methyltransferase TrmD family. Homodimer.

The protein localises to the cytoplasm. It carries out the reaction guanosine(37) in tRNA + S-adenosyl-L-methionine = N(1)-methylguanosine(37) in tRNA + S-adenosyl-L-homocysteine + H(+). Its function is as follows. Specifically methylates guanosine-37 in various tRNAs. This Coxiella burnetii (strain CbuG_Q212) (Coxiella burnetii (strain Q212)) protein is tRNA (guanine-N(1)-)-methyltransferase.